The following is a 344-amino-acid chain: Short chain dehydrogenase/reductase mfmJ (344 aa).

L51, K76, D99, N126, Y213, and K217 together coordinate NADP(+). Y213 serves as the catalytic Proton donor. The active-site Lowers pKa of active site Tyr is K217.

This sequence belongs to the short-chain dehydrogenases/reductases (SDR) family.

Short chain dehydrogenase/reductase; part of the gene cluster that mediates the biosynthesis of the phthalide-terpenoid hybrid 11'-O-desmethylfendlerol. MfmJ seems not to be involved directly in the biosynthesis of 11'-O-desmethylfendlerol and its role has still to be determined. The biosynthesis of 11'-O-desmethylfendlerol begins with the NR-PKS mfmB that forms 3,5-dimethylorsellinic acid (DMOA), which is then transformed into the phthalide 5,7-dihydroxy-4-(hydroxymethyl)-6-methylphthalide by the cytochrome P450 monooxygenase mfmA and the hydrolase mfmC. Subsequently, the methyltransferase mfmE catalyzes 7-O-methylation to yield 5-hydroxy-4-(hydroxymethyl)-7-methoxy-6-methylphthalide, which undergoes C-3 hydroxylation by the cytochrome P450 monooxygenase mfmF. The resultant cyclopolic acid (2,5-dihydroxy-4-(hydroxymethyl)-7-methoxy-6-methylphthalide) is then farnesylated by the DMATS-type prenyltransferase mfmD to afford 5-O-farnesylcyclopolic acid. Finally, the Pyr4-family terpene cyclase mfmH cyclizes the farnesyl moiety of 5-O-farnesylcyclopolic acid into a drimane-like structure, thus completing the biosynthesis of 11'-O-desmethylfendlerol. This chain is Short chain dehydrogenase/reductase mfmJ, found in Annulohypoxylon moriforme (Filamentous fungus).